We begin with the raw amino-acid sequence, 493 residues long: Probable UTP--glucose-1-phosphate uridylyltransferase (493 aa).

UTP contacts are provided by residues 105–108 (LTGK), glutamine 181, glycine 211, and aspartate 242. A substrate-binding site is contributed by 107–108 (GK). 240-242 (NVD) serves as a coordination point for substrate.

Belongs to the UDPGP type 1 family.

The catalysed reaction is alpha-D-glucose 1-phosphate + UTP + H(+) = UDP-alpha-D-glucose + diphosphate. In terms of biological role, plays a central role as a glucosyl donor in cellular metabolic pathways. This Saccharomyces cerevisiae (strain ATCC 204508 / S288c) (Baker's yeast) protein is Probable UTP--glucose-1-phosphate uridylyltransferase.